A 483-amino-acid chain; its full sequence is Regulatory protein ViaA (483 aa).

This sequence belongs to the ViaA family. Homodimer. Interacts with RavA.

The protein resides in the cytoplasm. Functionally, component of the RavA-ViaA chaperone complex, which may act on the membrane to optimize the function of some of the respiratory chains. ViaA stimulates the ATPase activity of RavA. This Salmonella agona (strain SL483) protein is Regulatory protein ViaA.